Here is a 320-residue protein sequence, read N- to C-terminus: Ferrochelatase (320 aa).

Fe cation is bound by residues histidine 194 and glutamate 275.

This sequence belongs to the ferrochelatase family.

The protein localises to the cytoplasm. It catalyses the reaction heme b + 2 H(+) = protoporphyrin IX + Fe(2+). The protein operates within porphyrin-containing compound metabolism; protoheme biosynthesis; protoheme from protoporphyrin-IX: step 1/1. Its function is as follows. Catalyzes the ferrous insertion into protoporphyrin IX. The chain is Ferrochelatase from Xylella fastidiosa (strain M12).